Here is a 119-residue protein sequence, read N- to C-terminus: Hydrogenase maturation factor HypA (119 aa).

H2 lines the Ni(2+) pocket. Zn(2+)-binding residues include C73, C76, C90, and C93.

Belongs to the HypA/HybF family.

Functionally, involved in the maturation of [NiFe] hydrogenases. Required for nickel insertion into the metal center of the hydrogenase. The sequence is that of Hydrogenase maturation factor HypA from Wolinella succinogenes (strain ATCC 29543 / DSM 1740 / CCUG 13145 / JCM 31913 / LMG 7466 / NCTC 11488 / FDC 602W) (Vibrio succinogenes).